The sequence spans 459 residues: uncharacterized protein (459 aa).

A TRAM domain is found at 2–60; the sequence is NLRVKQKIPLKIKRMGINGEGIGFYKRTLVFVPGALKGEEIFCQITSVKHNFVQARLLT. Cysteine 73, cysteine 79, cysteine 82, and cysteine 162 together coordinate [4Fe-4S] cluster. Residues glutamine 284, tyrosine 313, aspartate 334, and aspartate 382 each coordinate S-adenosyl-L-methionine. Residue cysteine 409 is the Nucleophile of the active site.

The protein belongs to the class I-like SAM-binding methyltransferase superfamily. RNA M5U methyltransferase family.

This is an uncharacterized protein from Streptococcus mutans serotype c (strain ATCC 700610 / UA159).